The primary structure comprises 140 residues: MDCNIVLLLRNNTMENNTKNYLEFIIEKNKVNFFKQMIEIVCVEQSCKIFFDSSNISNNGACIITFIPCSSSGELNNNMMFRLKKLGYFFCKVPKTTIIVDSELLSKCFRRLSTNDDAIVYIKDTGQLFVYNLDNNNNQY.

This is an uncharacterized protein from Acanthamoeba polyphaga mimivirus (APMV).